The following is a 252-amino-acid chain: Ciliogenesis and planar polarity effector 2 (252 aa).

Residues 46-252 are small GTPase-like; sequence QMNVDLVRYK…LRETSSEIIV (207 aa). GTP-binding positions include 62–67 and 173–176; these read TGVGKS and TKFD.

It belongs to the small GTPase superfamily. Rab family.

It localises to the cytoplasm. Its subcellular location is the cytoskeleton. The protein localises to the cilium basal body. Functionally, potential effector of the planar cell polarity signaling pathway. Plays a role in targeted membrane trafficking most probably at the level of vesicle fusion with membranes. Involved in cilium biogenesis by regulating the transport of cargo proteins to the basal body and to the apical tips of cilia. More generally involved in exocytosis in secretory cells. This is Ciliogenesis and planar polarity effector 2 (cplane2) from Danio rerio (Zebrafish).